The sequence spans 149 residues: Ribosome-binding factor A (149 aa).

A compositionally biased stretch (basic and acidic residues) spans 116-125 (TLFEELHPNP). The disordered stretch occupies residues 116-149 (TLFEELHPNPEEDDGDTDAETLLEDSESGIERET). Residues 126–143 (EEDDGDTDAETLLEDSES) show a composition bias toward acidic residues.

It belongs to the RbfA family. In terms of assembly, monomer. Binds 30S ribosomal subunits, but not 50S ribosomal subunits or 70S ribosomes.

It localises to the cytoplasm. One of several proteins that assist in the late maturation steps of the functional core of the 30S ribosomal subunit. Associates with free 30S ribosomal subunits (but not with 30S subunits that are part of 70S ribosomes or polysomes). Required for efficient processing of 16S rRNA. May interact with the 5'-terminal helix region of 16S rRNA. The chain is Ribosome-binding factor A from Leptospira biflexa serovar Patoc (strain Patoc 1 / Ames).